A 238-amino-acid polypeptide reads, in one-letter code: Aspartate/glutamate leucyltransferase (238 aa).

This sequence belongs to the R-transferase family. Bpt subfamily.

Its subcellular location is the cytoplasm. It carries out the reaction N-terminal L-glutamyl-[protein] + L-leucyl-tRNA(Leu) = N-terminal L-leucyl-L-glutamyl-[protein] + tRNA(Leu) + H(+). It catalyses the reaction N-terminal L-aspartyl-[protein] + L-leucyl-tRNA(Leu) = N-terminal L-leucyl-L-aspartyl-[protein] + tRNA(Leu) + H(+). Functionally, functions in the N-end rule pathway of protein degradation where it conjugates Leu from its aminoacyl-tRNA to the N-termini of proteins containing an N-terminal aspartate or glutamate. The chain is Aspartate/glutamate leucyltransferase from Nitrosococcus oceani (strain ATCC 19707 / BCRC 17464 / JCM 30415 / NCIMB 11848 / C-107).